Consider the following 973-residue polypeptide: Vacuolar protein sorting-associated protein 18 homolog (973 aa).

N-acetylalanine is present on Ala-2. Residues Ser-3, Ser-11, and Ser-13 each carry the phosphoserine modification. An N6-acetyllysine modification is found at Lys-362. Residues 454–481 (EEIALKFLEARQEEALAEFLQRKLASLK) are a coiled coil. Residues 618–772 (GSRLDARQLI…VVQEEEDVQT (155 aa)) form a CHCR repeat. Ser-689 is subject to Phosphoserine. Residues 802-848 (KEAICSSLKAYNHHIQELQREMEEATASAQRIRRDLQELRGRYGTVE) are a coiled coil. Residues 853-947 (CATCDFPLLN…ELVAAECVYC (95 aa)) form an RING-type zinc finger. Positions 903–929 (GAAPPPAKGSARAKEAEGGAATAGPSR) are disordered. Residue Ser-912 is modified to Phosphoserine.

Belongs to the VPS18 family. As to quaternary structure, core component of at least two putative endosomal tethering complexes, the homotypic fusion and vacuole protein sorting (HOPS) complex and the class C core vacuole/endosome tethering (CORVET) complex. Their common core is composed of the class C Vps proteins VPS11, VPS16, VPS18 and VPS33A, which in HOPS further associates with VPS39 and VPS41 and in CORVET with VPS8 and TGFBRAP1. Interacts with RAB5C. Interacts with HOOK1. Interacts with STX7, MON1B. Associates with adaptor protein complex 3 (AP-3) and clathrin:AP-3 complexes. Interacts with SYNPO2. Interacts with PLEKHM1. In terms of tissue distribution, ubiquitous. Expression was highest in heart and low in lung.

It is found in the late endosome membrane. The protein resides in the lysosome membrane. The protein localises to the early endosome. It localises to the cytoplasmic vesicle. Its subcellular location is the autophagosome. It is found in the clathrin-coated vesicle. Its function is as follows. Plays a role in vesicle-mediated protein trafficking to lysosomal compartments including the endocytic membrane transport and autophagic pathways. Believed to act as a core component of the putative HOPS and CORVET endosomal tethering complexes which are proposed to be involved in the Rab5-to-Rab7 endosome conversion probably implicating MON1A/B, and via binding SNAREs and SNARE complexes to mediate tethering and docking events during SNARE-mediated membrane fusion. The HOPS complex is proposed to be recruited to Rab7 on the late endosomal membrane and to regulate late endocytic, phagocytic and autophagic traffic towards lysosomes. The CORVET complex is proposed to function as a Rab5 effector to mediate early endosome fusion probably in specific endosome subpopulations. Required for fusion of endosomes and autophagosomes with lysosomes. Involved in dendrite development of Pukinje cells. This Homo sapiens (Human) protein is Vacuolar protein sorting-associated protein 18 homolog.